We begin with the raw amino-acid sequence, 208 residues long: N-(5'-phosphoribosyl)anthranilate isomerase (208 aa).

It belongs to the TrpF family.

The enzyme catalyses N-(5-phospho-beta-D-ribosyl)anthranilate = 1-(2-carboxyphenylamino)-1-deoxy-D-ribulose 5-phosphate. The protein operates within amino-acid biosynthesis; L-tryptophan biosynthesis; L-tryptophan from chorismate: step 3/5. This is N-(5'-phosphoribosyl)anthranilate isomerase from Natronomonas pharaonis (strain ATCC 35678 / DSM 2160 / CIP 103997 / JCM 8858 / NBRC 14720 / NCIMB 2260 / Gabara) (Halobacterium pharaonis).